A 206-amino-acid polypeptide reads, in one-letter code: Peroxynitrite isomerase (206 aa).

The GXWXGXG motif lies at 21-27 (GTWEGNG). Histidine 190 is a heme b binding site.

Belongs to the nitrobindin family. As to quaternary structure, homodimer. Heme b serves as cofactor.

The enzyme catalyses peroxynitrite = nitrate. It functions in the pathway nitrogen metabolism. Functionally, heme-binding protein able to scavenge peroxynitrite and to protect free L-tyrosine against peroxynitrite-mediated nitration, by acting as a peroxynitrite isomerase that converts peroxynitrite to nitrate. Therefore, this protein likely plays a role in peroxynitrite sensing and in the detoxification of reactive nitrogen and oxygen species (RNS and ROS, respectively). Is able to bind nitric oxide (NO) in vitro, but may act as a sensor of peroxynitrite levels in vivo. The sequence is that of Peroxynitrite isomerase from Kocuria rhizophila (strain ATCC 9341 / DSM 348 / NBRC 103217 / DC2201).